Consider the following 238-residue polypeptide: Snake venom metalloproteinase HF-1 (238 aa).

The Peptidase M12B domain maps to 17–221 (RYIQLVVVAD…YNPQCILNKP (205 aa)). Aspartate 106 lines the Ca(2+) pocket. Disulfide bonds link cysteine 130–cysteine 216 and cysteine 174–cysteine 181. Histidine 158 is a Zn(2+) binding site. Glutamate 159 is a catalytic residue. 2 residues coordinate Zn(2+): histidine 162 and histidine 168. Positions 216 and 219 each coordinate Ca(2+).

In terms of assembly, monomer. It depends on Zn(2+) as a cofactor. Expressed by the venom gland.

The protein resides in the secreted. Inhibited by EDTA and EGTA. Inhibited by serum and antihemorrhagic factors Da2-I and Da2-II from D.albiventris. Not inhibited by PMSF or SBT-I. Functionally, snake venom zinc metalloprotease that is weakly hemorrhagic and has Aalpha, Bbeta fibrinogenolytic activities. Cleaves the Aalpha chain of fibrinogen first, followed by the Bbeta chain and shows no effect on the gamma chain. Has caseinolytic activity. Induces dose-dependent edema. This is Snake venom metalloproteinase HF-1 from Bothrops marajoensis (Marajo lancehead).